The chain runs to 260 residues: Phosphatidate cytidylyltransferase (260 aa).

The next 7 helical transmembrane spans lie at 9-29 (IIAL…LMIF), 46-66 (MIKF…IIML), 70-90 (AGPW…FIVL), 102-122 (FMDA…FMFF), 130-150 (LHYI…AYLF), 172-192 (FIGG…FVDF), and 196-216 (VWIL…GDLV).

The protein belongs to the CDS family.

The protein localises to the cell membrane. The enzyme catalyses a 1,2-diacyl-sn-glycero-3-phosphate + CTP + H(+) = a CDP-1,2-diacyl-sn-glycerol + diphosphate. It functions in the pathway phospholipid metabolism; CDP-diacylglycerol biosynthesis; CDP-diacylglycerol from sn-glycerol 3-phosphate: step 3/3. This is Phosphatidate cytidylyltransferase (cdsA) from Staphylococcus aureus (strain COL).